Reading from the N-terminus, the 554-residue chain is Pigment biosynthesis transcriptional activator pigB (554 aa).

The interval 1-21 (MFTSSSPEQRKPRQSRQLPGA) is disordered. A DNA-binding region (zn(2)-C6 fungal-type) is located at residues 23–40 (CEECRRKKLRCDRQQPQC).

It is found in the nucleus. Functionally, transcription factor; part of the gene cluster that mediates the biosynthesis of azaphilone pigments (MonAzPs), a complex mixture of compounds with a common azaphilone skeleton very widely used as food colorants. Positively regulates the expression of the azaphilone pigments (MonAzPs) gene cluster. In Monascus ruber (Mold), this protein is Pigment biosynthesis transcriptional activator pigB.